A 185-amino-acid chain; its full sequence is Small ribosomal subunit protein bS6 (185 aa).

Basic and acidic residues predominate over residues 115–141; the sequence is AAQKAAAEKAEAARLEAEKAAEEEAAK. A disordered region spans residues 115-185; the sequence is AAQKAAAEKA…EEPKSDEEDA (71 aa). Residues 142–169 show a composition bias toward low complexity; that stretch reads AAEAQAKEAPAAEAPAEEAPAAEAPAEA. A compositionally biased stretch (acidic residues) spans 170 to 185; it reads PAEEPAEEPKSDEEDA.

It belongs to the bacterial ribosomal protein bS6 family.

Binds together with bS18 to 16S ribosomal RNA. The protein is Small ribosomal subunit protein bS6 of Desulfatibacillum aliphaticivorans.